A 286-amino-acid polypeptide reads, in one-letter code: Haloalkane dehalogenase 2 (286 aa).

The 100-residue stretch at 35–134 (PPILLCHGNP…RVRGVVLGNT (100 aa)) folds into the AB hydrolase-1 domain. The Nucleophile role is filled by Asp-109. Asp-238 (proton donor) is an active-site residue. The active-site Proton acceptor is the His-267.

It belongs to the haloalkane dehalogenase family. Type 1 subfamily. In terms of assembly, monomer.

It catalyses the reaction 1-haloalkane + H2O = a halide anion + a primary alcohol + H(+). Catalyzes hydrolytic cleavage of carbon-halogen bonds in halogenated aliphatic compounds, leading to the formation of the corresponding primary alcohols, halide ions and protons. The protein is Haloalkane dehalogenase 2 (dhmA2) of Mycobacterium bovis (strain ATCC BAA-935 / AF2122/97).